Consider the following 344-residue polypeptide: S-adenosylmethionine:tRNA ribosyltransferase-isomerase (344 aa).

It belongs to the QueA family. As to quaternary structure, monomer.

It localises to the cytoplasm. It carries out the reaction 7-aminomethyl-7-carbaguanosine(34) in tRNA + S-adenosyl-L-methionine = epoxyqueuosine(34) in tRNA + adenine + L-methionine + 2 H(+). The protein operates within tRNA modification; tRNA-queuosine biosynthesis. Transfers and isomerizes the ribose moiety from AdoMet to the 7-aminomethyl group of 7-deazaguanine (preQ1-tRNA) to give epoxyqueuosine (oQ-tRNA). This is S-adenosylmethionine:tRNA ribosyltransferase-isomerase from Nitrosococcus oceani (strain ATCC 19707 / BCRC 17464 / JCM 30415 / NCIMB 11848 / C-107).